The following is a 316-amino-acid chain: 4-hydroxy-3-methylbut-2-enyl diphosphate reductase (316 aa).

Cys12 is a [4Fe-4S] cluster binding site. (2E)-4-hydroxy-3-methylbut-2-enyl diphosphate contacts are provided by His41 and His74. Dimethylallyl diphosphate is bound by residues His41 and His74. Isopentenyl diphosphate-binding residues include His41 and His74. Position 96 (Cys96) interacts with [4Fe-4S] cluster. (2E)-4-hydroxy-3-methylbut-2-enyl diphosphate is bound at residue His124. Residue His124 coordinates dimethylallyl diphosphate. His124 is an isopentenyl diphosphate binding site. Glu126 acts as the Proton donor in catalysis. Thr169 is a (2E)-4-hydroxy-3-methylbut-2-enyl diphosphate binding site. Cys199 lines the [4Fe-4S] cluster pocket. Positions 227, 228, 229, and 271 each coordinate (2E)-4-hydroxy-3-methylbut-2-enyl diphosphate. Residues Ser227, Ser228, Asn229, and Ser271 each contribute to the dimethylallyl diphosphate site. Isopentenyl diphosphate contacts are provided by Ser227, Ser228, Asn229, and Ser271.

Belongs to the IspH family. The cofactor is [4Fe-4S] cluster.

The enzyme catalyses isopentenyl diphosphate + 2 oxidized [2Fe-2S]-[ferredoxin] + H2O = (2E)-4-hydroxy-3-methylbut-2-enyl diphosphate + 2 reduced [2Fe-2S]-[ferredoxin] + 2 H(+). The catalysed reaction is dimethylallyl diphosphate + 2 oxidized [2Fe-2S]-[ferredoxin] + H2O = (2E)-4-hydroxy-3-methylbut-2-enyl diphosphate + 2 reduced [2Fe-2S]-[ferredoxin] + 2 H(+). It functions in the pathway isoprenoid biosynthesis; dimethylallyl diphosphate biosynthesis; dimethylallyl diphosphate from (2E)-4-hydroxy-3-methylbutenyl diphosphate: step 1/1. Its pathway is isoprenoid biosynthesis; isopentenyl diphosphate biosynthesis via DXP pathway; isopentenyl diphosphate from 1-deoxy-D-xylulose 5-phosphate: step 6/6. Functionally, catalyzes the conversion of 1-hydroxy-2-methyl-2-(E)-butenyl 4-diphosphate (HMBPP) into a mixture of isopentenyl diphosphate (IPP) and dimethylallyl diphosphate (DMAPP). Acts in the terminal step of the DOXP/MEP pathway for isoprenoid precursor biosynthesis. This Xanthomonas axonopodis pv. citri (strain 306) protein is 4-hydroxy-3-methylbut-2-enyl diphosphate reductase.